The primary structure comprises 338 residues: uncharacterized protein (338 aa).

Positions 1–29 (MIKQLYKNITICTLALSTTFTVLPATSYA) are cleaved as a signal peptide.

This sequence belongs to the aerolysin family.

This is an uncharacterized protein from Staphylococcus aureus (strain MSSA476).